Consider the following 92-residue polypeptide: C-C motif chemokine 4 (92 aa).

A signal peptide spans 1–23; it reads MKLCVTVLSLLMLVAAFCSPALS. 2 disulfides stabilise this stretch: Cys34-Cys58 and Cys35-Cys74.

Belongs to the intercrine beta (chemokine CC) family. Homodimer and heterodimer of MIP-1-alpha(4-69) and MIP-1-beta(3-69). Post-translationally, N-terminal processed form MIP-1-beta(3-69) is produced by proteolytic cleavage after secretion from peripheral blood lymphocytes.

The protein resides in the secreted. Its function is as follows. Monokine with inflammatory and chemokinetic properties. Binds to CCR5. One of the major HIV-suppressive factors produced by CD8+ T-cells. Recombinant MIP-1-beta induces a dose-dependent inhibition of different strains of HIV-1, HIV-2, and simian immunodeficiency virus (SIV). The processed form MIP-1-beta(3-69) retains the abilities to induce down-modulation of surface expression of the chemokine receptor CCR5 and to inhibit the CCR5-mediated entry of HIV-1 in T-cells. MIP-1-beta(3-69) is also a ligand for CCR1 and CCR2 isoform B. The polypeptide is C-C motif chemokine 4 (CCL4) (Homo sapiens (Human)).